Consider the following 697-residue polypeptide: MARRAKKMASNSGDSSPEPGIKEINETWKGAIACLGVALLFLMTIGVLYWQVVEKPDTNWVLRGQVSGLVWDKKSLSFSFKSLSQDKTFARIDARHLPVRGGALLNNHCWFNTTRFCHTWDGVANLQVTLDTPNQSVAECYRVEWTPLNCQVALQDCFSMVNTSWYGGGSMRLQYWPINNANINSQPFVISDLQDTPTGYGSVLERYFLGSTGVAVRVHQEVPLHVGIESRKQLCLGIPPNAEMQPLRYTICVSDSLRSAHQQFGTVIPVVQPDQPDTSILRLPHWRSQRVADIALKLEHNLKTFTRKLKLHRLGEGIMDLGEQSTLLLSNEVDETLQSQNRYRGLRQLRLSITLSPFTSIDSHHFQTTLQEGRENLWLGLPSAANGSQGPLLMKWKGKFAVKLNISNEEAQDWFIEQVHSLQRRLEVDYVNLEVGVGSPYVGQAQHHSCRLCGDDYINQFALLAEKLGNGTTVSAATRTAHLPVFVRMVPRQSDWSHAGLKGLIPSILHYSLLGYSFFIPDVIGGSLTDGFLADEELFVRWMQIATFLPVMSFSTPPWVFGETWIVNVTRSCIHRHQTFVVPLLMKYAAEWTSLGHPVFRPLWWVSPSDPNTFTINDEFLIGDEVLVAPVTESGKVHRDIYLPGNSFQWKDMNTAQVFEGGTLLREYPVALTEVAVFIRQKSKYTPAIAEIQQATT.

A disordered region spans residues 1–20; that stretch reads MARRAKKMASNSGDSSPEPG. Over 2–29 the chain is Cytoplasmic; sequence ARRAKKMASNSGDSSPEPGIKEINETWK. A helical membrane pass occupies residues 30-50; that stretch reads GAIACLGVALLFLMTIGVLYW. N112, N134, N162, N386, N405, and N470 each carry an N-linked (GlcNAc...) asparagine glycan. 2 helical membrane-spanning segments follow: residues 503–521 and 542–562; these read GLIP…FFIP and WMQI…WVFG. N568 is a glycosylation site (N-linked (GlcNAc...) asparagine).

It belongs to the glycosyl hydrolase 31 family. As to quaternary structure, homodimer; disulfide-linked. As to expression, electroplax tissue, brain (200-fold less), and heart (500-fold less).

The protein localises to the membrane. Its function is as follows. This glycoprotein is probably not a functional part of the chloride channel. The polypeptide is SITS-binding protein (Tetronarce californica (Pacific electric ray)).